We begin with the raw amino-acid sequence, 342 residues long: Thymidylate synthase (342 aa).

DUMP-binding positions include arginine 31 and 156–157 (RR). The Nucleophile role is filled by cysteine 176. Residues 196-199 (RSGD), asparagine 207, and 237-239 (HVY) each bind dUMP. Residue aspartate 199 participates in (6R)-5,10-methylene-5,6,7,8-tetrahydrofolate binding. Alanine 341 is a binding site for (6R)-5,10-methylene-5,6,7,8-tetrahydrofolate.

It belongs to the thymidylate synthase family. Bacterial-type ThyA subfamily. In terms of assembly, homodimer.

The protein localises to the cytoplasm. The enzyme catalyses dUMP + (6R)-5,10-methylene-5,6,7,8-tetrahydrofolate = 7,8-dihydrofolate + dTMP. Its pathway is pyrimidine metabolism; dTTP biosynthesis. Its function is as follows. Catalyzes the reductive methylation of 2'-deoxyuridine-5'-monophosphate (dUMP) to 2'-deoxythymidine-5'-monophosphate (dTMP) while utilizing 5,10-methylenetetrahydrofolate (mTHF) as the methyl donor and reductant in the reaction, yielding dihydrofolate (DHF) as a by-product. This enzymatic reaction provides an intracellular de novo source of dTMP, an essential precursor for DNA biosynthesis. The chain is Thymidylate synthase from Haloferax volcanii (Halobacterium volcanii).